We begin with the raw amino-acid sequence, 333 residues long: T-cell surface glycoprotein CD1b-2 (333 aa).

The N-terminal stretch at 1 to 20 is a signal peptide; the sequence is MLLLPLLLLGVILPGGDNED. At 21–302 the chain is on the extracellular side; the sequence is VFQGPTSFHL…LYWGHPTSIG (282 aa). N-linked (GlcNAc...) asparagine glycans are attached at residues Asn-38, Asn-75, and Asn-146. 3 disulfides stabilise this stretch: Cys-120–Cys-184, Cys-149–Cys-163, and Cys-224–Cys-279. In terms of domain architecture, Ig-like spans 185–295; sequence PRYLLGVLDA…LGDQDIILYW (111 aa). A helical membrane pass occupies residues 303–323; sequence LILVAIIVPSLILSICLALWF. The Cytoplasmic portion of the chain corresponds to 324 to 333; it reads WRRWSYQNIL. The short motif at 329-332 is the Internalization signal element; sequence YQNI.

In terms of assembly, heterodimer with B2M (beta-2-microglobulin). Interacts with saposin C.

It localises to the cell membrane. The protein localises to the endosome membrane. Its subcellular location is the lysosome membrane. In terms of biological role, antigen-presenting protein that binds self and non-self lipid and glycolipid antigens and presents them to T-cell receptors on natural killer T-cells. This chain is T-cell surface glycoprotein CD1b-2, found in Ovis aries (Sheep).